Consider the following 341-residue polypeptide: Very-long-chain 3-oxoacyl-CoA reductase (341 aa).

The helical transmembrane segment at 22 to 42 (AIYGFLLAGVAAFAAPIVSTI) threads the bilayer. 8 residues coordinate NADP(+): Leu-67, Asp-123, Asp-131, Asn-150, Tyr-217, Lys-221, Ile-250, and Thr-252. Tyr-217 functions as the Proton donor in the catalytic mechanism. Residue Lys-221 is the Lowers pKa of active site Tyr of the active site.

It belongs to the short-chain dehydrogenases/reductases (SDR) family.

It is found in the endoplasmic reticulum membrane. It catalyses the reaction a very-long-chain (3R)-3-hydroxyacyl-CoA + NADP(+) = a very-long-chain 3-oxoacyl-CoA + NADPH + H(+). It participates in lipid metabolism; fatty acid biosynthesis. Component of the microsomal membrane bound fatty acid elongation system, which produces the 26-carbon very long-chain fatty acids (VLCFA) from palmitate. Catalyzes the reduction of the 3-ketoacyl-CoA intermediate that is formed in each cycle of fatty acid elongation. VLCFAs serve as precursors for ceramide and sphingolipids. This chain is Very-long-chain 3-oxoacyl-CoA reductase, found in Phaeosphaeria nodorum (strain SN15 / ATCC MYA-4574 / FGSC 10173) (Glume blotch fungus).